The primary structure comprises 170 residues: CFA/I fimbrial subunit B (170 aa).

Residues M1–A23 form the signal peptide.

It belongs to the fimbrial CS1 protein family. In terms of assembly, CFA/I fimbriae are rather rigid, thread-like filaments of 0.5-1 micrometer, with an apparent axial hole, and a diameter of 7 nanometers. A single CFA/I fimbria consists of about 100 identical protein subunits.

It localises to the fimbrium. Fimbriae (also called pili), polar filaments radiating from the surface of the bacterium to a length of 0.5-1.5 micrometers and numbering 100-300 per cell, enable bacteria to colonize the epithelium of specific host organs. The sequence is that of CFA/I fimbrial subunit B (cfaB) from Escherichia coli.